A 284-amino-acid polypeptide reads, in one-letter code: Ribose-phosphate pyrophosphokinase (284 aa).

Residues 34–36 and 92–93 contribute to the ATP site; these read DNE and RQ. His125 and Asp163 together coordinate Mg(2+). Lys186 is a catalytic residue. D-ribose 5-phosphate-binding positions include Arg188, Asp212, and 216–220; that span reads STGGT.

This sequence belongs to the ribose-phosphate pyrophosphokinase family. Class III (archaeal) subfamily. In terms of assembly, homotetramer. Mg(2+) serves as cofactor.

Its subcellular location is the cytoplasm. It carries out the reaction D-ribose 5-phosphate + ATP = 5-phospho-alpha-D-ribose 1-diphosphate + AMP + H(+). It participates in metabolic intermediate biosynthesis; 5-phospho-alpha-D-ribose 1-diphosphate biosynthesis; 5-phospho-alpha-D-ribose 1-diphosphate from D-ribose 5-phosphate (route I): step 1/1. Activated by inorganic phosphate, with a maximal activity at 190 mM. Above this concentration inorganic phosphate progressively inhibits the kinase. Completely inhibited by ADP, and partially inhibited by alpha,beta-methylene ATP (mATP). Lack of allosteric regulation. In terms of biological role, involved in the biosynthesis of the central metabolite phospho-alpha-D-ribosyl-1-pyrophosphate (PRPP) via the transfer of pyrophosphoryl group from ATP to 1-hydroxyl of ribose-5-phosphate (Rib-5-P). It can also use dATP as diphosphoryl donor. In Methanocaldococcus jannaschii (strain ATCC 43067 / DSM 2661 / JAL-1 / JCM 10045 / NBRC 100440) (Methanococcus jannaschii), this protein is Ribose-phosphate pyrophosphokinase.